The sequence spans 215 residues: Protein Syd (215 aa).

This sequence belongs to the Syd family.

The protein resides in the cell inner membrane. In terms of biological role, interacts with the SecY protein in vivo. May bind preferentially to an uncomplexed state of SecY, thus functioning either as a chelating agent for excess SecY in the cell or as a regulatory factor that negatively controls the translocase function. In Shewanella amazonensis (strain ATCC BAA-1098 / SB2B), this protein is Protein Syd.